Consider the following 421-residue polypeptide: Phosphoglycerate kinase (421 aa).

(2R)-3-phosphoglycerate is bound by residues V23, D24, F25, N26, Q41, R42, S65, H66, G68, R69, L124, R125, H172, and R173. ADP is bound at residue G216. G216 is a CDP binding site. K218 serves as a coordination point for AMP. CDP is bound at residue D221. D221 is a Mg(2+) binding site. AMP is bound at residue K222. K222 serves as a coordination point for ATP. G240 is a binding site for ADP. Residue G240 participates in CDP binding. G241 and G315 together coordinate AMP. Residues G241 and G315 each contribute to the ATP site. The CDP site is built by G340 and F345. ADP is bound at residue F345. Residue E346 coordinates AMP. Residues E346, D377, and T378 each coordinate ATP. D377 contacts Mg(2+).

Belongs to the phosphoglycerate kinase family. Monomer. The cofactor is Mg(2+).

It localises to the cytoplasm. The protein resides in the mitochondrion. The catalysed reaction is (2R)-3-phosphoglycerate + ATP = (2R)-3-phospho-glyceroyl phosphate + ADP. It functions in the pathway carbohydrate degradation; glycolysis; pyruvate from D-glyceraldehyde 3-phosphate: step 2/5. Its function is as follows. Catalyzes one of the two ATP producing reactions in the glycolytic pathway via the reversible conversion of 1,3-diphosphoglycerate to 3-phosphoglycerate. Both L- and D- forms of purine and pyrimidine nucleotides can be used as substrates, but the activity is much lower on pyrimidines. Negatively regulates the biosynthesis of acetyl-CoA from pyruvate in the mitochondrion. In Emericella nidulans (strain FGSC A4 / ATCC 38163 / CBS 112.46 / NRRL 194 / M139) (Aspergillus nidulans), this protein is Phosphoglycerate kinase (pgkA).